The sequence spans 129 residues: ALK and LTK ligand 1 (129 aa).

An N-terminal signal peptide occupies residues 1–27 (MRPLKPGAPLPALFLLALALSPHGAHG). Residues 24–63 (GAHGRPRGRRGARVTDKEPKPLLFLPAAGAGRTPSGSRSA) are disordered. A compositionally biased stretch (basic residues) spans 25–35 (AHGRPRGRRGA). Disulfide bonds link C90–C126 and C104–C113.

It belongs to the ALKAL family. Widely expressed with highest levels in thyroid and moderate levels in stomach, trachea, small intestine, prostate and brain.

The protein resides in the secreted. It is found in the cell membrane. In terms of biological role, cytokine that acts as a physiological ligand for receptor tyrosine kinase LTK, leading to its activation. Monomeric ALKAL1 binds to LTK, leading to LTK homodimerization and activation. In contrast to ALKAL2, does not act as a potent physiological ligand for ALK. The protein is ALK and LTK ligand 1 of Homo sapiens (Human).